The chain runs to 166 residues: Ribosome maturation factor RimM (166 aa).

The region spanning 94-166 is the PRC barrel domain; that stretch reads GDEYYWRDLM…EMVVRLLPGL (73 aa).

This sequence belongs to the RimM family. As to quaternary structure, binds ribosomal protein uS19.

Its subcellular location is the cytoplasm. In terms of biological role, an accessory protein needed during the final step in the assembly of 30S ribosomal subunit, possibly for assembly of the head region. Essential for efficient processing of 16S rRNA. May be needed both before and after RbfA during the maturation of 16S rRNA. It has affinity for free ribosomal 30S subunits but not for 70S ribosomes. The sequence is that of Ribosome maturation factor RimM from Syntrophus aciditrophicus (strain SB).